Consider the following 126-residue polypeptide: Probable prefoldin subunit 6 (126 aa).

It belongs to the prefoldin subunit beta family. In terms of assembly, heterohexamer of two PFD-alpha type and four PFD-beta type subunits. In terms of tissue distribution, expressed in embryonic blastomeres and gonads.

The protein resides in the cytoplasm. Binds specifically to cytosolic chaperonin (c-CPN) and transfers target proteins to it. Binds to nascent polypeptide chain and promotes folding in an environment in which there are many competing pathways for nonnative proteins. Required for positioning of the mitotic spindle. This Caenorhabditis elegans protein is Probable prefoldin subunit 6 (pfd-6).